A 305-amino-acid chain; its full sequence is Protoheme IX farnesyltransferase 2 (305 aa).

Helical transmembrane passes span 31-51 (VVML…ETWI), 53-73 (WKIL…AAVI), 103-123 (ALVF…LWVN), 125-145 (LTAL…TMYL), 152-172 (NIVI…TAVT), 179-199 (ALLL…ALAI), 231-251 (VLLA…AIYL), and 277-297 (AMKT…VLLV).

Belongs to the UbiA prenyltransferase family. Protoheme IX farnesyltransferase subfamily.

It is found in the cell inner membrane. It carries out the reaction heme b + (2E,6E)-farnesyl diphosphate + H2O = Fe(II)-heme o + diphosphate. It functions in the pathway porphyrin-containing compound metabolism; heme O biosynthesis; heme O from protoheme: step 1/1. Its function is as follows. Converts heme B (protoheme IX) to heme O by substitution of the vinyl group on carbon 2 of heme B porphyrin ring with a hydroxyethyl farnesyl side group. The sequence is that of Protoheme IX farnesyltransferase 2 from Pseudoalteromonas atlantica (strain T6c / ATCC BAA-1087).